The following is a 102-amino-acid chain: Putative pterin-4-alpha-carbinolamine dehydratase (102 aa).

The protein belongs to the pterin-4-alpha-carbinolamine dehydratase family.

The catalysed reaction is (4aS,6R)-4a-hydroxy-L-erythro-5,6,7,8-tetrahydrobiopterin = (6R)-L-erythro-6,7-dihydrobiopterin + H2O. In Burkholderia cenocepacia (strain ATCC BAA-245 / DSM 16553 / LMG 16656 / NCTC 13227 / J2315 / CF5610) (Burkholderia cepacia (strain J2315)), this protein is Putative pterin-4-alpha-carbinolamine dehydratase.